Reading from the N-terminus, the 484-residue chain is Protein phosphatase 1B (484 aa).

Positions 1-14 (MGAFLDKPKTEKHN) are enriched in basic and acidic residues. The segment at 1-20 (MGAFLDKPKTEKHNAHGAGN) is disordered. A lipid anchor (N-myristoyl glycine) is attached at Gly-2. Lys-12 participates in a covalent cross-link: Glycyl lysine isopeptide (Lys-Gly) (interchain with G-Cter in ISG15). The region spanning 23-295 (RYGLSSMQGW…DNMSIVLVCF (273 aa)) is the PPM-type phosphatase domain. The Mn(2+) site is built by Asp-60 and Gly-61. Lys-142 is covalently cross-linked (Glycyl lysine isopeptide (Lys-Gly) (interchain with G-Cter in ISG15)). Mn(2+) contacts are provided by Asp-243 and Asp-286. The residue at position 391 (Ser-391) is a Phosphoserine. A disordered region spans residues 431–484 (EENPAEQAATAASSNSDAGNTVAMQESHTESKSDLAELDSCTEDAGTKMSGEKL). Positions 440–456 (TAASSNSDAGNTVAMQE) are enriched in polar residues.

Belongs to the PP2C family. Monomer. Interacts with PAK6. Interacts with the phosphorylated form of IKBKB/IKKB. It depends on Mg(2+) as a cofactor. Mn(2+) serves as cofactor. Post-translationally, isgylation negatively regulates its activity. N-myristoylation is essential for the recognition of its substrates for dephosphorylation.

It localises to the cytoplasm. The protein resides in the cytosol. The protein localises to the membrane. The enzyme catalyses O-phospho-L-seryl-[protein] + H2O = L-seryl-[protein] + phosphate. It carries out the reaction O-phospho-L-threonyl-[protein] + H2O = L-threonyl-[protein] + phosphate. Enzyme with a broad specificity. Dephosphorylates PRKAA1 and PRKAA2. Inhibits TBK1-mediated antiviral signaling by dephosphorylating it at 'Ser-172'. Plays an important role in the termination of TNF-alpha-mediated NF-kappa-B activation through dephosphorylating and inactivating IKBKB/IKKB. In Bos taurus (Bovine), this protein is Protein phosphatase 1B (PPM1B).